The chain runs to 520 residues: Catalase easC (520 aa).

Histidine 71 is a catalytic residue. Tyrosine 361 contacts heme.

Belongs to the catalase family. Heme serves as cofactor.

The protein operates within alkaloid biosynthesis; ergot alkaloid biosynthesis. In terms of biological role, catalase; part of the gene cluster that mediates the biosynthesis of fumiclavanine C, a fungal ergot alkaloid. DmaW catalyzes the first step of ergot alkaloid biosynthesis by condensing dimethylallyl diphosphate (DMAP) and tryptophan to form 4-dimethylallyl-L-tryptophan. The second step is catalyzed by the methyltransferase easF that methylates 4-dimethylallyl-L-tryptophan in the presence of S-adenosyl-L-methionine, resulting in the formation of 4-dimethylallyl-L-abrine. The catalase easC and the FAD-dependent oxidoreductase easE then transform 4-dimethylallyl-L-abrine to chanoclavine-I which is further oxidized by EasD in the presence of NAD(+), resulting in the formation of chanoclavine-I aldehyde. EasA reduces chanoclavine-I aldehyde to dihydrochanoclavine-I aldehyde that spontaneously dehydrates to form 6,8-dimethyl-6,7-didehydroergoline. EasG then catalyzes the reduction of 6,8-dimethyl-6,7-didehydroergoline to form festuclavine. Hydrolysis of festuclavine by easM then leads to the formation of fumigaclavine B which is in turn acetylated by easN to fumigaclavine A. Finally, easL catalyzes the conversion of fumigaclavine A into fumigaclavine C by attaching a dimethylallyl moiety to C-2 of the indole nucleus. In Aspergillus fumigatus (strain ATCC MYA-4609 / CBS 101355 / FGSC A1100 / Af293) (Neosartorya fumigata), this protein is Catalase easC.